The following is a 409-amino-acid chain: Peptidase T (409 aa).

Histidine 78 contributes to the Zn(2+) binding site. Aspartate 80 is an active-site residue. Aspartate 140 contacts Zn(2+). Residue glutamate 174 is the Proton acceptor of the active site. Zn(2+)-binding residues include glutamate 175, aspartate 197, and histidine 379.

This sequence belongs to the peptidase M20B family. Zn(2+) is required as a cofactor.

Its subcellular location is the cytoplasm. The catalysed reaction is Release of the N-terminal residue from a tripeptide.. Cleaves the N-terminal amino acid of tripeptides. This is Peptidase T from Photobacterium profundum (strain SS9).